We begin with the raw amino-acid sequence, 637 residues long: tRNA-dihydrouridine(47) synthase [NAD(P)(+)]-like (637 aa).

Disordered regions lie at residues 1–21 (MAET…ACER), 41–63 (LDGD…EPGA), and 85–105 (ERQV…VKPA). A compositionally biased stretch (basic residues) spans 89-104 (PKRARGQNKSRPHVKP). C3H1-type zinc fingers lie at residues 107 to 137 (YDKD…HDVG) and 145 to 175 (ADLG…HLGP). Phosphothreonine is present on Thr260. 2 positions are modified to phosphoserine: Ser263 and Ser264. FMN is bound by residues 298 to 300 (PLT) and Gln352. Cys383 (proton donor) is an active-site residue. Lys403 is covalently cross-linked (Glycyl lysine isopeptide (Lys-Gly) (interchain with G-Cter in SUMO2)). Residues Lys422, His452, 484–486 (NGD), and 507–508 (AR) contribute to the FMN site.

The protein belongs to the Dus family. Dus3 subfamily. The cofactor is FMN.

The catalysed reaction is 5,6-dihydrouridine(47) in tRNA + NAD(+) = uridine(47) in tRNA + NADH + H(+). The enzyme catalyses 5,6-dihydrouridine(47) in tRNA + NADP(+) = uridine(47) in tRNA + NADPH + H(+). It carries out the reaction a 5,6-dihydrouridine in mRNA + NAD(+) = a uridine in mRNA + NADH + H(+). It catalyses the reaction a 5,6-dihydrouridine in mRNA + NADP(+) = a uridine in mRNA + NADPH + H(+). In terms of biological role, catalyzes the synthesis of dihydrouridine, a modified base, in various RNAs, such as tRNAs, mRNAs and some long non-coding RNAs (lncRNAs). Mainly modifies the uridine in position 47 (U47) in the D-loop of most cytoplasmic tRNAs. Also able to mediate the formation of dihydrouridine in some mRNAs, thereby regulating their translation. The protein is tRNA-dihydrouridine(47) synthase [NAD(P)(+)]-like of Mus musculus (Mouse).